The primary structure comprises 175 residues: Clathrin-associated protein AP-3 complex component APS3 (175 aa).

This sequence belongs to the adaptor complexes small subunit family. As to quaternary structure, adaptor protein complex 3 (AP-3) is a heterotetramer composed of 2 large adaptins, a medium adaptin and a small adaptin.

Its subcellular location is the golgi apparatus. It is found in the cytoplasmic vesicle membrane. Part of the AP-3 complex, an adapter-related complex which is not clathrin-associated. The complex is associated with the Golgi region as well as more peripheral structures. It facilitates the budding of vesicles from the Golgi membrane. Involved in vacuolar trafficking and contributes to hyphal growth and pathogenesis. In Candida albicans (strain SC5314 / ATCC MYA-2876) (Yeast), this protein is Clathrin-associated protein AP-3 complex component APS3 (APS3).